Consider the following 180-residue polypeptide: Insulin-like growth factor 2 (180 aa).

The signal sequence occupies residues 1–24 (MGIPVGKSMLVLLISLAFALCCIA). The tract at residues 25 to 52 (AYRPSETLCGGELVDTLQFVCSDRGFYF) is b. Disulfide bonds link C33/C71, C45/C84, and C70/C75. Residues 53 to 64 (SRPSSRANRRSR) are c. The segment at 65–85 (GIVEECCFRSCDLALLETYCA) is a. The d stretch occupies residues 86-91 (TPAKSE). Positions 92–180 (RDVSTSQAVL…ASSEMSSNHQ (89 aa)) are cleaved as a propeptide — e peptide. The segment at 160 to 180 (VLPPKDPAHGGASSEMSSNHQ) is disordered.

It belongs to the insulin family. As to quaternary structure, interacts with MYORG; this interaction is required for IGF2 secretion. Interacts with integrins ITGAV:ITGB3 and ITGA6:ITGB4; integrin-binding is required for IGF2 signaling. Interacts with IGFBP2. Post-translationally, proteolytically processed by PCSK4, proIGF2 is cleaved at Arg-128 and Arg-92 to generate big-IGF2 and mature IGF2.

It localises to the secreted. Functionally, the insulin-like growth factors possess growth-promoting activity. Major fetal growth hormone in mammals. Plays a key role in regulating fetoplacental development. IGF2 is influenced by placental lactogen. Also involved in tissue differentiation. In adults, involved in glucose metabolism in adipose tissue, skeletal muscle and liver. Acts as a ligand for integrin which is required for IGF2 signaling. Positively regulates myogenic transcription factor MYOD1 function by facilitating the recruitment of transcriptional coactivators, thereby controlling muscle terminal differentiation. Inhibits myoblast differentiation and modulates metabolism via increasing the mitochondrial respiration rate. Its function is as follows. Preptin undergoes glucose-mediated co-secretion with insulin, and acts as a physiological amplifier of glucose-mediated insulin secretion. Exhibits osteogenic properties by increasing osteoblast mitogenic activity through phosphoactivation of MAPK1 and MAPK3. This chain is Insulin-like growth factor 2, found in Rattus norvegicus (Rat).